Consider the following 381-residue polypeptide: Probable serine/threonine-protein kinase PBL21 (381 aa).

Cysteine 3 carries S-palmitoyl cysteine lipidation. A Protein kinase domain is found at 78-354 (FREVNLLGEG…GDIVVALEYL (277 aa)). Residues 84–92 (LGEGGFGRV) and lysine 106 each bind ATP. Catalysis depends on aspartate 204, which acts as the Proton acceptor. Residues 362–381 (EARNVSSPSPEISRTPRRDL) are disordered.

Belongs to the protein kinase superfamily. Ser/Thr protein kinase family. Palmitoylation at Cys-3 and Cys-7 are required for plasma membrane location.

Its subcellular location is the cell membrane. It carries out the reaction L-seryl-[protein] + ATP = O-phospho-L-seryl-[protein] + ADP + H(+). The catalysed reaction is L-threonyl-[protein] + ATP = O-phospho-L-threonyl-[protein] + ADP + H(+). Its function is as follows. May be involved in plant defense signaling. The polypeptide is Probable serine/threonine-protein kinase PBL21 (Arabidopsis thaliana (Mouse-ear cress)).